The following is a 93-amino-acid chain: Small ribosomal subunit protein uS19 (93 aa).

It belongs to the universal ribosomal protein uS19 family.

Its function is as follows. Protein S19 forms a complex with S13 that binds strongly to the 16S ribosomal RNA. The chain is Small ribosomal subunit protein uS19 from Wolinella succinogenes (strain ATCC 29543 / DSM 1740 / CCUG 13145 / JCM 31913 / LMG 7466 / NCTC 11488 / FDC 602W) (Vibrio succinogenes).